We begin with the raw amino-acid sequence, 420 residues long: Histidine--tRNA ligase (420 aa).

This sequence belongs to the class-II aminoacyl-tRNA synthetase family. As to quaternary structure, homodimer.

It is found in the cytoplasm. It carries out the reaction tRNA(His) + L-histidine + ATP = L-histidyl-tRNA(His) + AMP + diphosphate + H(+). This chain is Histidine--tRNA ligase, found in Mycobacterium marinum (strain ATCC BAA-535 / M).